A 278-amino-acid polypeptide reads, in one-letter code: Hydroxyethylthiazole kinase (278 aa).

Met-49 contributes to the substrate binding site. ATP-binding residues include Asn-125 and Ser-171. Residue Gly-198 participates in substrate binding.

It belongs to the Thz kinase family. Requires Mg(2+) as cofactor.

It carries out the reaction 5-(2-hydroxyethyl)-4-methylthiazole + ATP = 4-methyl-5-(2-phosphooxyethyl)-thiazole + ADP + H(+). It functions in the pathway cofactor biosynthesis; thiamine diphosphate biosynthesis; 4-methyl-5-(2-phosphoethyl)-thiazole from 5-(2-hydroxyethyl)-4-methylthiazole: step 1/1. Its function is as follows. Catalyzes the phosphorylation of the hydroxyl group of 4-methyl-5-beta-hydroxyethylthiazole (THZ). The polypeptide is Hydroxyethylthiazole kinase (Natronomonas pharaonis (strain ATCC 35678 / DSM 2160 / CIP 103997 / JCM 8858 / NBRC 14720 / NCIMB 2260 / Gabara) (Halobacterium pharaonis)).